The following is a 37-amino-acid chain: Calcitonin gene-related peptide (37 aa).

The cysteines at positions 2 and 7 are disulfide-linked. F37 carries the post-translational modification Phenylalanine amide.

It belongs to the calcitonin family.

Functionally, CGRP induces vasodilation. It dilates a variety of vessels including the coronary, cerebral and systemic vasculature. Its abundance in the CNS also points toward a neurotransmitter or neuromodulator role. The sequence is that of Calcitonin gene-related peptide from Pelophylax ridibundus (Marsh frog).